The primary structure comprises 115 residues: Large ribosomal subunit protein bL19 (115 aa).

The protein belongs to the bacterial ribosomal protein bL19 family.

Its function is as follows. This protein is located at the 30S-50S ribosomal subunit interface and may play a role in the structure and function of the aminoacyl-tRNA binding site. The polypeptide is Large ribosomal subunit protein bL19 (Edwardsiella ictaluri (strain 93-146)).